A 149-amino-acid polypeptide reads, in one-letter code: Nascent polypeptide-associated complex subunit beta-2 (149 aa).

The region spanning 38 to 103 (DKDNTKLQAE…PKENTLNGLY (66 aa)) is the NAC-A/B domain.

This sequence belongs to the NAC-beta family. In terms of assembly, part of the nascent polypeptide-associated complex (NAC), consisting of EGD2 and either EGD1 or BTT1. NAC associates with ribosomes via EGD1 or BTT1.

It is found in the cytoplasm. The protein localises to the nucleus. Acts as a component of the nascent polypeptide-associated complex (NAC), which promotes mitochondrial protein import by enhancing productive ribosome interactions with the outer mitochondrial membrane. Also blocks the inappropriate interaction of ribosomes translating non-secretory nascent polypeptides with translocation sites in the membrane of the endoplasmic reticulum. BTT1 may act as a transcription factor that exert a negative effect on the expression of several genes that are transcribed by RNA polymerase II. This Saccharomyces cerevisiae (strain YJM789) (Baker's yeast) protein is Nascent polypeptide-associated complex subunit beta-2 (BTT1).